The following is a 414-amino-acid chain: Esterase FrsA (414 aa).

This sequence belongs to the FrsA family.

The enzyme catalyses a carboxylic ester + H2O = an alcohol + a carboxylate + H(+). In terms of biological role, catalyzes the hydrolysis of esters. This is Esterase FrsA from Escherichia coli O17:K52:H18 (strain UMN026 / ExPEC).